A 144-amino-acid chain; its full sequence is Large ribosomal subunit protein uL15 (144 aa).

Positions 1–52 (MKLHTLKSTPGARVEKHRVGRGHAAGKGKQAGKGQSGQNKRHGHRLGFEGGQ) are disordered. Positions 15-26 (EKHRVGRGHAAG) are enriched in basic residues.

Belongs to the universal ribosomal protein uL15 family. Part of the 50S ribosomal subunit.

Its function is as follows. Binds to the 23S rRNA. This is Large ribosomal subunit protein uL15 from Mycoplasmopsis agalactiae (strain NCTC 10123 / CIP 59.7 / PG2) (Mycoplasma agalactiae).